A 932-amino-acid polypeptide reads, in one-letter code: Isoleucine--tRNA ligase (932 aa).

Positions 58-68 match the 'HIGH' region motif; it reads PYANGDIHIGH. Residue Glu570 coordinates L-isoleucyl-5'-AMP. Residues 611-615 carry the 'KMSKS' region motif; the sequence is KMSKS. Lys614 lines the ATP pocket. Zn(2+)-binding residues include Cys895, Cys898, Cys915, and Cys918.

Belongs to the class-I aminoacyl-tRNA synthetase family. IleS type 1 subfamily. As to quaternary structure, monomer. The cofactor is Zn(2+).

The protein resides in the cytoplasm. It catalyses the reaction tRNA(Ile) + L-isoleucine + ATP = L-isoleucyl-tRNA(Ile) + AMP + diphosphate. In terms of biological role, catalyzes the attachment of isoleucine to tRNA(Ile). As IleRS can inadvertently accommodate and process structurally similar amino acids such as valine, to avoid such errors it has two additional distinct tRNA(Ile)-dependent editing activities. One activity is designated as 'pretransfer' editing and involves the hydrolysis of activated Val-AMP. The other activity is designated 'posttransfer' editing and involves deacylation of mischarged Val-tRNA(Ile). The chain is Isoleucine--tRNA ligase from Dechloromonas aromatica (strain RCB).